We begin with the raw amino-acid sequence, 85 residues long: Small ribosomal subunit protein uS17 (85 aa).

It belongs to the universal ribosomal protein uS17 family. As to quaternary structure, part of the 30S ribosomal subunit.

One of the primary rRNA binding proteins, it binds specifically to the 5'-end of 16S ribosomal RNA. The polypeptide is Small ribosomal subunit protein uS17 (Pasteurella multocida (strain Pm70)).